Here is a 213-residue protein sequence, read N- to C-terminus: MIKWLTRPADYAPVWQDMRAFTAGRGAATPDEVWLCEHAPVYTLGQAGKPEHLLNPGAIPVVMCDRGGQVTYHGPGQVVAYTLFDLRRAGLFVREYVRLLEDAAIGTLDDFGVPGACRKPGAPGVYVPLGPAGELAKIAALGIKIRNGYAYHGVALNVDMDLSPFLGINPCGYEGLVTVDMAACGVRRDLVDVGQRLAERLLAAMPEPAGATR.

The BPL/LPL catalytic domain maps to 27-209; it reads AATPDEVWLC…RLLAAMPEPA (183 aa). Substrate-binding positions include 66 to 73, 140 to 142, and 153 to 155; these read RGGQVTYH, ALG, and GVA. The active-site Acyl-thioester intermediate is cysteine 171.

Belongs to the LipB family.

The protein localises to the cytoplasm. The catalysed reaction is octanoyl-[ACP] + L-lysyl-[protein] = N(6)-octanoyl-L-lysyl-[protein] + holo-[ACP] + H(+). Its pathway is protein modification; protein lipoylation via endogenous pathway; protein N(6)-(lipoyl)lysine from octanoyl-[acyl-carrier-protein]: step 1/2. Functionally, catalyzes the transfer of endogenously produced octanoic acid from octanoyl-acyl-carrier-protein onto the lipoyl domains of lipoate-dependent enzymes. Lipoyl-ACP can also act as a substrate although octanoyl-ACP is likely to be the physiological substrate. The protein is Octanoyltransferase of Bordetella petrii (strain ATCC BAA-461 / DSM 12804 / CCUG 43448).